The primary structure comprises 259 residues: Phosphatidylglycerol--prolipoprotein diacylglyceryl transferase (259 aa).

4 consecutive transmembrane segments (helical) span residues 12-32, 41-61, 80-100, and 109-129; these read LAIHWYALCILSGLVLAVYLA, ISSDAIFDFILIAFPLAIVGA, IIAIWNGGIAIYGGLITGALV, and VLNPIHFLDIAAPSVMVAQAI. R131 provides a ligand contact to a 1,2-diacyl-sn-glycero-3-phospho-(1'-sn-glycerol). Transmembrane regions (helical) follow at residues 167-187, 194-214, and 226-246; these read IPTFLYESLWNLLGFVIIMMW, LLDGEIFAFYLIWYGSGRLVI, and GIRISQYVSALLIIIGLIFVI.

It belongs to the Lgt family.

The protein localises to the cell membrane. The catalysed reaction is L-cysteinyl-[prolipoprotein] + a 1,2-diacyl-sn-glycero-3-phospho-(1'-sn-glycerol) = an S-1,2-diacyl-sn-glyceryl-L-cysteinyl-[prolipoprotein] + sn-glycerol 1-phosphate + H(+). It participates in protein modification; lipoprotein biosynthesis (diacylglyceryl transfer). Catalyzes the transfer of the diacylglyceryl group from phosphatidylglycerol to the sulfhydryl group of the N-terminal cysteine of a prolipoprotein, the first step in the formation of mature lipoproteins. The protein is Phosphatidylglycerol--prolipoprotein diacylglyceryl transferase of Streptococcus pyogenes serotype M49 (strain NZ131).